Here is a 279-residue protein sequence, read N- to C-terminus: Large ribosomal subunit protein uL2 (279 aa).

The interval 224 to 279 is disordered; the sequence is AMNPIDHPHGGGEGRTSGGRHPVTPWGKGTKGNRTRKSKASDKLIVRSRHAKKKGR. Over residues 269–279 the composition is skewed to basic residues; it reads VRSRHAKKKGR.

Belongs to the universal ribosomal protein uL2 family. As to quaternary structure, part of the 50S ribosomal subunit. Forms a bridge to the 30S subunit in the 70S ribosome.

One of the primary rRNA binding proteins. Required for association of the 30S and 50S subunits to form the 70S ribosome, for tRNA binding and peptide bond formation. It has been suggested to have peptidyltransferase activity; this is somewhat controversial. Makes several contacts with the 16S rRNA in the 70S ribosome. This is Large ribosomal subunit protein uL2 from Cereibacter sphaeroides (strain ATCC 17025 / ATH 2.4.3) (Rhodobacter sphaeroides).